We begin with the raw amino-acid sequence, 436 residues long: UDP-N-acetylmuramate--L-alanine ligase (436 aa).

110-116 (GAHGKTS) serves as a coordination point for ATP.

Belongs to the MurCDEF family.

The protein resides in the cytoplasm. The enzyme catalyses UDP-N-acetyl-alpha-D-muramate + L-alanine + ATP = UDP-N-acetyl-alpha-D-muramoyl-L-alanine + ADP + phosphate + H(+). It functions in the pathway cell wall biogenesis; peptidoglycan biosynthesis. Its function is as follows. Cell wall formation. This Lacticaseibacillus casei (strain BL23) (Lactobacillus casei) protein is UDP-N-acetylmuramate--L-alanine ligase.